A 472-amino-acid polypeptide reads, in one-letter code: Argininosuccinate lyase (472 aa).

It belongs to the lyase 1 family. Argininosuccinate lyase subfamily.

Its subcellular location is the cytoplasm. It carries out the reaction 2-(N(omega)-L-arginino)succinate = fumarate + L-arginine. The protein operates within amino-acid biosynthesis; L-arginine biosynthesis; L-arginine from L-ornithine and carbamoyl phosphate: step 3/3. This chain is Argininosuccinate lyase, found in Mycobacterium avium (strain 104).